The primary structure comprises 699 residues: Dymeclin (699 aa).

The N-myristoyl glycine moiety is linked to residue G2. The residue at position 346 (S346) is a Phosphoserine.

This sequence belongs to the dymeclin family.

The polypeptide is Dymeclin (Drosophila melanogaster (Fruit fly)).